A 505-amino-acid polypeptide reads, in one-letter code: Lysine--tRNA ligase (505 aa).

The Mg(2+) site is built by E415 and E422.

The protein belongs to the class-II aminoacyl-tRNA synthetase family. In terms of assembly, homodimer. The cofactor is Mg(2+).

Its subcellular location is the cytoplasm. The enzyme catalyses tRNA(Lys) + L-lysine + ATP = L-lysyl-tRNA(Lys) + AMP + diphosphate. In Salmonella paratyphi C (strain RKS4594), this protein is Lysine--tRNA ligase.